Reading from the N-terminus, the 447-residue chain is Phosphoglucosamine mutase (447 aa).

S100 (phosphoserine intermediate) is an active-site residue. 4 residues coordinate Mg(2+): S100, D240, D242, and D244. S100 carries the post-translational modification Phosphoserine.

This sequence belongs to the phosphohexose mutase family. Mg(2+) serves as cofactor. Activated by phosphorylation.

It catalyses the reaction alpha-D-glucosamine 1-phosphate = D-glucosamine 6-phosphate. In terms of biological role, catalyzes the conversion of glucosamine-6-phosphate to glucosamine-1-phosphate. The chain is Phosphoglucosamine mutase from Anoxybacillus flavithermus (strain DSM 21510 / WK1).